Consider the following 159-residue polypeptide: Na(+)/H(+) antiporter subunit E1 (159 aa).

A run of 4 helical transmembrane segments spans residues 1 to 21 (MAIQ…VTNS), 27 to 47 (FVLG…VLPG), 60 to 80 (LIIT…KIIL), and 101 to 121 (WQLV…VLGI).

The protein belongs to the CPA3 antiporters (TC 2.A.63) subunit E family. As to quaternary structure, may form a heterooligomeric complex that consists of seven subunits: mnhA1, mnhB1, mnhC1, mnhD1, mnhE1, mnhF1 and mnhG1.

It localises to the cell membrane. Its function is as follows. Mnh complex is a Na(+)/H(+) antiporter involved in Na(+) excretion. The protein is Na(+)/H(+) antiporter subunit E1 (mnhE1) of Staphylococcus epidermidis (strain ATCC 35984 / DSM 28319 / BCRC 17069 / CCUG 31568 / BM 3577 / RP62A).